The following is a 122-amino-acid chain: Large ribosomal subunit protein uL18 (122 aa).

It belongs to the universal ribosomal protein uL18 family. Part of the 50S ribosomal subunit; part of the 5S rRNA/L5/L18/L25 subcomplex. Contacts the 5S and 23S rRNAs.

In terms of biological role, this is one of the proteins that bind and probably mediate the attachment of the 5S RNA into the large ribosomal subunit, where it forms part of the central protuberance. The sequence is that of Large ribosomal subunit protein uL18 from Acetivibrio thermocellus (strain ATCC 27405 / DSM 1237 / JCM 9322 / NBRC 103400 / NCIMB 10682 / NRRL B-4536 / VPI 7372) (Clostridium thermocellum).